The sequence spans 898 residues: Protein translocase subunit SecA (898 aa).

ATP is bound by residues Q87, 105–109, and D512; that span reads GEGKT. Polar residues predominate over residues 855-865; the sequence is MQYQNNEGTSS. A disordered region spans residues 855-898; it reads MQYQNNEGTSSLHEKSEHKIGRNESCPCGSGKKYKHCHGSKAKY. Basic and acidic residues predominate over residues 866-876; that stretch reads LHEKSEHKIGR. Positions 880, 882, 891, and 892 each coordinate Zn(2+). A compositionally biased stretch (basic residues) spans 886-898; it reads KKYKHCHGSKAKY.

The protein belongs to the SecA family. As to quaternary structure, monomer and homodimer. Part of the essential Sec protein translocation apparatus which comprises SecA, SecYEG and auxiliary proteins SecDF-YajC and YidC. It depends on Zn(2+) as a cofactor.

The protein localises to the cell inner membrane. It localises to the cytoplasm. It catalyses the reaction ATP + H2O + cellular proteinSide 1 = ADP + phosphate + cellular proteinSide 2.. Functionally, part of the Sec protein translocase complex. Interacts with the SecYEG preprotein conducting channel. Has a central role in coupling the hydrolysis of ATP to the transfer of proteins into and across the cell membrane, serving both as a receptor for the preprotein-SecB complex and as an ATP-driven molecular motor driving the stepwise translocation of polypeptide chains across the membrane. In Histophilus somni (strain 129Pt) (Haemophilus somnus), this protein is Protein translocase subunit SecA.